A 163-amino-acid polypeptide reads, in one-letter code: MENNKKLTLCEIPNAFIQFFNNKDYENKSKLFNNTETDQWWVSGDKNVYPFAGSDSIQKRLDGFQTLQNGYDKYSMTLIDQIIDHERRIMLVVGKTVSMGFGMTKEYSNEYAFIISVNEDGKICAIKEYFDPSAYLKMAQSTPSLQGIFKNFFPDSFAPTSRD.

This sequence belongs to the UPF0523 family.

The polypeptide is UPF0523 protein B (Dictyostelium discoideum (Social amoeba)).